A 101-amino-acid polypeptide reads, in one-letter code: Urease subunit beta (101 aa).

This sequence belongs to the urease beta subunit family. In terms of assembly, heterotrimer of UreA (gamma), UreB (beta) and UreC (alpha) subunits. Three heterotrimers associate to form the active enzyme.

It localises to the cytoplasm. It catalyses the reaction urea + 2 H2O + H(+) = hydrogencarbonate + 2 NH4(+). It participates in nitrogen metabolism; urea degradation; CO(2) and NH(3) from urea (urease route): step 1/1. The sequence is that of Urease subunit beta from Cupriavidus metallidurans (strain ATCC 43123 / DSM 2839 / NBRC 102507 / CH34) (Ralstonia metallidurans).